A 402-amino-acid polypeptide reads, in one-letter code: Type II NADH:quinone oxidoreductase (402 aa).

FAD contacts are provided by residues 12–16, 39–40, and V83; these read GAGYA and NK. Residue E172 is part of the active site. FAD-binding positions include D302, 319–320, and K379; that span reads AQ.

The protein belongs to the NADH dehydrogenase family. Requires FAD as cofactor.

The protein resides in the cell membrane. It carries out the reaction a quinone + NADH + H(+) = a quinol + NAD(+). In terms of biological role, alternative, nonproton pumping NADH:quinone oxidoreductase that delivers electrons to the respiratory chain by oxidation of NADH and reduction of quinones, and contributes to the regeneration of NAD(+). The sequence is that of Type II NADH:quinone oxidoreductase from Staphylococcus epidermidis (strain ATCC 12228 / FDA PCI 1200).